An 897-amino-acid chain; its full sequence is Putative POM121-like protein 1-like (897 aa).

The span at 1–19 shows a compositional bias: basic and acidic residues; the sequence is MPEQDKDPRVQENPDDQRT. Disordered stretches follow at residues 1 to 177, 211 to 252, 266 to 302, 315 to 348, 362 to 469, 484 to 522, 536 to 612, 642 to 741, 753 to 793, and 812 to 856; these read MPEQ…LPPP, IPDC…PKSQ, EVPS…RDTA, ASRD…GSLL, ATAA…ASRP, DCRP…RPKS, AEVP…LPPS, AQRS…ASRP, AISD…DRPK, and STAP…APFT. Residues 54-65 show a composition bias toward polar residues; the sequence is LHAQSSEIRYNH. Over residues 66 to 76 the composition is skewed to low complexity; the sequence is TSQTSWTSSST. 3 stretches are compositionally biased toward polar residues: residues 77 to 89, 103 to 114, and 219 to 228; these read KRNA…SSTG, SRCQLTLSYSKT, and PSHTLSSLAT. Composition is skewed to polar residues over residues 376–385, 417–430, 490–499, and 556–579; these read NQRSQTSRTR, SHCQ…NTVS, PSHTLSSLAT, and FSSS…TSLI. A compositionally biased stretch (low complexity) spans 599-612; it reads TSAPAAAAAALPPS. Composition is skewed to polar residues over residues 650 to 676, 689 to 702, 762 to 771, and 828 to 849; these read NQRS…STEG, SHCQ…NTVS, PSHTLSSLAT, and FSSS…QDTS. The chain crosses the membrane as a helical span at residues 877–897; that stretch reads LGLFLLVFSFFFLLTWASFSF.

The protein belongs to the POM121 family.

The protein resides in the membrane. The chain is Putative POM121-like protein 1-like from Homo sapiens (Human).